We begin with the raw amino-acid sequence, 297 residues long: N-acetylmuramic acid 6-phosphate etherase (297 aa).

In terms of domain architecture, SIS spans 56-219 (AIEAFNKGGR…STISMIGIGK (164 aa)). Glutamate 84 serves as the catalytic Proton donor. Glutamate 115 is a catalytic residue.

It belongs to the GCKR-like family. MurNAc-6-P etherase subfamily. In terms of assembly, homodimer.

The catalysed reaction is N-acetyl-D-muramate 6-phosphate + H2O = N-acetyl-D-glucosamine 6-phosphate + (R)-lactate. It participates in amino-sugar metabolism; N-acetylmuramate degradation. In terms of biological role, specifically catalyzes the cleavage of the D-lactyl ether substituent of MurNAc 6-phosphate, producing GlcNAc 6-phosphate and D-lactate. This chain is N-acetylmuramic acid 6-phosphate etherase, found in Lactococcus lactis subsp. lactis (strain IL1403) (Streptococcus lactis).